Here is a 308-residue protein sequence, read N- to C-terminus: General transcription factor IIH subunit 3 (308 aa).

The C4-type zinc finger occupies 268–285; it reads CSVCLSIFCNFSPICTTC.

This sequence belongs to the TFB4 family. In terms of assembly, part of a TFIID-containing RNA polymerase II pre-initiation complex that is composed of TBP and at least GTF2A1, GTF2A2, GTF2E1, GTF2E2, GTF2F1, GTF2H2, GTF2H3, GTF2H4, GTF2H5, GTF2B, TCEA1, ERCC2, ERCC3, TAF1, TAF2, TAF3, TAF4, TAF5, TAF6, TAF7, TAF8, TAF9, TAF10, TAF11, TAF12 and TAF13. Component of the 7-subunit TFIIH core complex composed of XPB/ERCC3, XPD/ERCC2, GTF2H1, GTF2H2, GTF2H3, GTF2H4 and GTF2H5, which is active in NER. The core complex associates with the 3-subunit CDK-activating kinase (CAK) module composed of CCNH/cyclin H, CDK7 and MNAT1 to form the 10-subunit holoenzyme (holo-TFIIH) active in transcription. Interacts with RARA; the interaction requires prior phosphorylation of RARA on 'Ser-369' which then enhances interaction of RARA with CDK7.

The protein localises to the nucleus. Its function is as follows. Component of the general transcription and DNA repair factor IIH (TFIIH) core complex, which is involved in general and transcription-coupled nucleotide excision repair (NER) of damaged DNA and, when complexed to CAK, in RNA transcription by RNA polymerase II. In NER, TFIIH acts by opening DNA around the lesion to allow the excision of the damaged oligonucleotide and its replacement by a new DNA fragment. In transcription, TFIIH has an essential role in transcription initiation. When the pre-initiation complex (PIC) has been established, TFIIH is required for promoter opening and promoter escape. Phosphorylation of the C-terminal tail (CTD) of the largest subunit of RNA polymerase II by the kinase module CAK controls the initiation of transcription. The sequence is that of General transcription factor IIH subunit 3 (GTF2H3) from Homo sapiens (Human).